Reading from the N-terminus, the 487-residue chain is N-succinylglutamate 5-semialdehyde dehydrogenase (487 aa).

Residue 221–226 (GSSRTG) coordinates NAD(+). Active-site residues include Glu-244 and Cys-278.

This sequence belongs to the aldehyde dehydrogenase family. AstD subfamily.

The enzyme catalyses N-succinyl-L-glutamate 5-semialdehyde + NAD(+) + H2O = N-succinyl-L-glutamate + NADH + 2 H(+). It participates in amino-acid degradation; L-arginine degradation via AST pathway; L-glutamate and succinate from L-arginine: step 4/5. Catalyzes the NAD-dependent reduction of succinylglutamate semialdehyde into succinylglutamate. In Pseudomonas putida (strain GB-1), this protein is N-succinylglutamate 5-semialdehyde dehydrogenase.